The chain runs to 138 residues: MSGAIYGIGTDIIQIERVEGVMQRTHGRFAEKVLGPDELRIYQARKARSERRGLAFLATRFAAKEAVSKAIGLGMHWPMTWRAVQTLNLPSGQPVVRYSGELADWIAQRGLHIQISVTDERDYAVAFAVAELQSKLSA.

Mg(2+)-binding residues include Asp11 and Glu65.

Belongs to the P-Pant transferase superfamily. AcpS family. The cofactor is Mg(2+).

It is found in the cytoplasm. The catalysed reaction is apo-[ACP] + CoA = holo-[ACP] + adenosine 3',5'-bisphosphate + H(+). Transfers the 4'-phosphopantetheine moiety from coenzyme A to a Ser of acyl-carrier-protein. In Ralstonia nicotianae (strain ATCC BAA-1114 / GMI1000) (Ralstonia solanacearum), this protein is Holo-[acyl-carrier-protein] synthase.